A 715-amino-acid chain; its full sequence is Lactococcin-A transport/processing ATP-binding protein LcnC (715 aa).

The Peptidase C39 domain maps to 11–138 (QVDEMDCGCA…SEWTGISLFL (128 aa)). Cys-17 is an active-site residue. Transmembrane regions (helical) follow at residues 167 to 187 (VILN…LGSY), 197 to 217 (IPNA…LTYI), 237 to 257 (LAID…MSFF), 282 to 302 (TILS…ILGL), 307 to 327 (LFLL…IFTP), and 396 to 416 (AIIQ…LVIS). The ABC transmembrane type-1 domain occupies 168–450 (ILNIVIASFI…IINLQTKLQK (283 aa)). The 234-residue stretch at 482-715 (LNMSDISYQY…NGFYEQLYHN (234 aa)) folds into the ABC transporter domain. ATP is bound at residue 515-522 (GMSGSGKS).

The protein belongs to the ABC transporter superfamily. Bacteriocin (lactococcin) exporter (TC 3.A.1.112.3) family.

It localises to the cell membrane. In terms of biological role, involved in the export process of the bacteriocin lactococcin A. This is Lactococcin-A transport/processing ATP-binding protein LcnC (lcnC) from Lactococcus lactis subsp. lactis (Streptococcus lactis).